Reading from the N-terminus, the 137-residue chain is MLAPKKTKFRKMQKGRLRGPALRGASIDFGEIGIKALEHGKLTSQQIESARIAIMRHIKRGGKVWIRVFPDRVRTEKPAEVRQGKGKGSPVGWFAPVKPGRVLYEIKGVDIETAKEALTRAQHKLPIKTKIVVKEGL.

Belongs to the universal ribosomal protein uL16 family. As to quaternary structure, part of the 50S ribosomal subunit.

Its function is as follows. Binds 23S rRNA and is also seen to make contacts with the A and possibly P site tRNAs. The protein is Large ribosomal subunit protein uL16 of Solidesulfovibrio magneticus (strain ATCC 700980 / DSM 13731 / RS-1) (Desulfovibrio magneticus).